The sequence spans 161 residues: Peroxynitrite isomerase 2 (161 aa).

The GXWXGXG signature appears at 17 to 23 (GTWAGQG). A heme b-binding site is contributed by H152.

Belongs to the nitrobindin family. As to quaternary structure, homodimer. The cofactor is heme b.

The catalysed reaction is peroxynitrite = nitrate. It functions in the pathway nitrogen metabolism. In terms of biological role, heme-binding protein able to scavenge peroxynitrite and to protect free L-tyrosine against peroxynitrite-mediated nitration, by acting as a peroxynitrite isomerase that converts peroxynitrite to nitrate. Therefore, this protein likely plays a role in peroxynitrite sensing and in the detoxification of reactive nitrogen and oxygen species (RNS and ROS, respectively). Is able to bind nitric oxide (NO) in vitro, but may act as a sensor of peroxynitrite levels in vivo. This is Peroxynitrite isomerase 2 from Mycobacterium marinum (strain ATCC BAA-535 / M).